We begin with the raw amino-acid sequence, 337 residues long: Hsp90 co-chaperone Cdc37-like 1 (337 aa).

The segment covering 1 to 11 has biased composition (pro residues); that stretch reads MEQPWPPPGPW. A disordered region spans residues 1–42; the sequence is MEQPWPPPGPWSLPRAEGEAEEENDLDVFPSSPRCPQLPGGS. Residues 2–171 are self-association; sequence EQPWPPPGPW…YEQKIRHFGM (170 aa). Phosphoserine occurs at positions 32 and 88. The stretch at 85 to 122 forms a coiled coil; that stretch reads NSESLDQEHAKAQIAVSELRQREEEWRQKEEALVQREK. Residues 147–277 form a self-association and interaction with Hsp90 region; sequence KDTEDEDKSE…SRVRLYSQSQ (131 aa). The interval 267–337 is interaction with Hsp70; the sequence is KSRVRLYSQS…DDEPKMMDTV (71 aa). The tract at residues 278-337 is required for interaction with STIP1; that stretch reads SFQPMTVQNHVPHSGVGSIGLLESLPQNPDYLQYSINTALCSLNSVVHKEDDEPKMMDTV.

Belongs to the CDC37 family. As to quaternary structure, self-associates. Forms complexes with Hsp70 and Hsp90. Interacts with CDC37, FKBP4, PPID and STIP1.

The protein resides in the cytoplasm. In terms of biological role, co-chaperone that binds to numerous proteins and promotes their interaction with Hsp70 and Hsp90. The protein is Hsp90 co-chaperone Cdc37-like 1 (CDC37L1) of Pongo abelii (Sumatran orangutan).